A 203-amino-acid chain; its full sequence is Acireductone dioxygenase 3 (203 aa).

Fe(2+) is bound by residues His96, His98, Glu102, and His141. The Ni(2+) site is built by His96, His98, Glu102, and His141.

It belongs to the acireductone dioxygenase (ARD) family. Fe(2+) is required as a cofactor. It depends on Ni(2+) as a cofactor.

It localises to the cytoplasm. Its subcellular location is the nucleus. It carries out the reaction 1,2-dihydroxy-5-(methylsulfanyl)pent-1-en-3-one + O2 = 4-methylsulfanyl-2-oxobutanoate + formate + 2 H(+). The catalysed reaction is 1,2-dihydroxy-5-(methylsulfanyl)pent-1-en-3-one + O2 = 3-(methylsulfanyl)propanoate + CO + formate + 2 H(+). The protein operates within amino-acid biosynthesis; L-methionine biosynthesis via salvage pathway; L-methionine from S-methyl-5-thio-alpha-D-ribose 1-phosphate: step 5/6. In terms of biological role, catalyzes 2 different reactions between oxygen and the acireductone 1,2-dihydroxy-3-keto-5-methylthiopentene (DHK-MTPene) depending upon the metal bound in the active site. Fe-containing acireductone dioxygenase (Fe-ARD) produces formate and 2-keto-4-methylthiobutyrate (KMTB), the alpha-ketoacid precursor of methionine in the methionine recycle pathway. Ni-containing acireductone dioxygenase (Ni-ARD) produces methylthiopropionate, carbon monoxide and formate, and does not lie on the methionine recycle pathway. The protein is Acireductone dioxygenase 3 of Physcomitrium patens (Spreading-leaved earth moss).